Here is a 404-residue protein sequence, read N- to C-terminus: Coenzyme F(430) synthetase (404 aa).

112 to 117 (GVKGKT) is a binding site for ATP.

The protein belongs to the MurCDEF family.

It catalyses the reaction 15,17(3)-seco-F430-17(3)-acid + ATP = coenzyme F430 + ADP + phosphate. Functionally, involved in the biosynthesis of the unique nickel-containing tetrapyrrole coenzyme F430, the prosthetic group of methyl-coenzyme M reductase (MCR), which plays a key role in methanogenesis and anaerobic methane oxidation. Catalyzes the activation the g-propionate side chain of 15,17(3)-seco-F430-17(3)-acid (seco-F430) for intramolecular C-C bond formation to yield the carbocyclic F ring of coenzyme F430. This chain is Coenzyme F(430) synthetase, found in Methanocaldococcus jannaschii (strain ATCC 43067 / DSM 2661 / JAL-1 / JCM 10045 / NBRC 100440) (Methanococcus jannaschii).